Consider the following 78-residue polypeptide: Small ribosomal subunit protein uS17 (78 aa).

It belongs to the universal ribosomal protein uS17 family. As to quaternary structure, part of the 30S ribosomal subunit.

One of the primary rRNA binding proteins, it binds specifically to the 5'-end of 16S ribosomal RNA. The polypeptide is Small ribosomal subunit protein uS17 (Allorhizobium ampelinum (strain ATCC BAA-846 / DSM 112012 / S4) (Agrobacterium vitis (strain S4))).